Consider the following 432-residue polypeptide: D-amino acid dehydrogenase (432 aa).

FAD is bound at residue 3-17 (VVILGSGVVGVTSAW).

It belongs to the DadA oxidoreductase family. It depends on FAD as a cofactor.

The enzyme catalyses a D-alpha-amino acid + A + H2O = a 2-oxocarboxylate + AH2 + NH4(+). It participates in amino-acid degradation; D-alanine degradation; NH(3) and pyruvate from D-alanine: step 1/1. Its function is as follows. Oxidative deamination of D-amino acids. This is D-amino acid dehydrogenase from Salmonella agona (strain SL483).